We begin with the raw amino-acid sequence, 291 residues long: MLIDGFTVVAQIVNFLILVWLLKRFFYRPILDALDERENRIASELAAATGKQREAEAELHRFRQKNEEFDQRREVLLTTVTDEVRAERQRLMEAAHADADRIRISRNEAQQREYQVLHDAIERRTCAEVLAITRKVLADLAGTTLEIHMTEAFIRRLRTLGPEEKAQLAVALQAGGVESGHSATFQVFPPIVGQGSPSGIAVILVRSAFELPAEQQEKISTVIRETLKEEVRFNFGVEPNLISGIEMIAGGHKVAWSVAGYLASLEEEVSRLLNAKGAVGEGEAKSSTAAL.

Residues 2-22 (LIDGFTVVAQIVNFLILVWLL) traverse the membrane as a helical segment.

The protein belongs to the ATPase B chain family. In terms of assembly, F-type ATPases have 2 components, F(1) - the catalytic core - and F(0) - the membrane proton channel. F(1) has five subunits: alpha(3), beta(3), gamma(1), delta(1), epsilon(1). F(0) has three main subunits: a(1), b(2) and c(10-14). The alpha and beta chains form an alternating ring which encloses part of the gamma chain. F(1) is attached to F(0) by a central stalk formed by the gamma and epsilon chains, while a peripheral stalk is formed by the delta and b chains.

It localises to the cell inner membrane. In terms of biological role, f(1)F(0) ATP synthase produces ATP from ADP in the presence of a proton or sodium gradient. F-type ATPases consist of two structural domains, F(1) containing the extramembraneous catalytic core and F(0) containing the membrane proton channel, linked together by a central stalk and a peripheral stalk. During catalysis, ATP synthesis in the catalytic domain of F(1) is coupled via a rotary mechanism of the central stalk subunits to proton translocation. Its function is as follows. Component of the F(0) channel, it forms part of the peripheral stalk, linking F(1) to F(0). The sequence is that of ATP synthase subunit b 2 from Nitrosospira multiformis (strain ATCC 25196 / NCIMB 11849 / C 71).